A 149-amino-acid chain; its full sequence is Calmodulin-2 (149 aa).

Residue A2 is modified to N-acetylalanine. 4 consecutive EF-hand domains span residues 8–43 (EQIA…LGQN), 44–79 (PTEA…KMKD), 81–116 (DSEE…LGEK), and 117–149 (LTDE…MLAK). Residues D21, D23, D25, C27, E32, D57, D59, N61, T63, E68, D94, D96, N98, Y100, and D105 each coordinate Ca(2+). At K116 the chain carries N6,N6,N6-trimethyllysine. 5 residues coordinate Ca(2+): D130, D132, D134, Q136, and E141.

It belongs to the calmodulin family.

Functionally, calmodulin mediates the control of a large number of enzymes, ion channels and other proteins by Ca(2+). Among the enzymes to be stimulated by the calmodulin-Ca(2+) complex are a number of protein kinases and phosphatases. The protein is Calmodulin-2 (CAM72) of Petunia hybrida (Petunia).